The primary structure comprises 536 residues: Keratin, type II cytoskeletal 4 (536 aa).

The interval 1-145 (MISRQSSVRG…DPEIQKIRTA (145 aa)) is head. Arg13 carries the omega-N-methylarginine modification. A coil 1A region spans residues 146 to 181 (EREQIKTLNNKFASFIDKVRFLEQQNKVLETKWNLL). Residues 146–457 (EREQIKTLNN…KLLEGEECRM (312 aa)) enclose the IF rod domain. Residues 182-200 (QQQTTTTSPRNLDPFFETY) are linker 1. A coil 1B region spans residues 201–293 (INALRKNLDT…LYEAELSQMQ (93 aa)). The interval 294–316 (THVSDTSVVLSMDNNRNLDLDGI) is linker 12. Positions 317–454 (IAEVRAQYEE…TYRKLLEGEE (138 aa)) are coil 2. A tail region spans residues 455–524 (CRMSGECKSA…TSSATITKRS (70 aa)). The segment at 515–536 (TSSATITKRSPRTRQDPDGLQP) is disordered. A compositionally biased stretch (basic and acidic residues) spans 527–536 (TRQDPDGLQP).

Belongs to the intermediate filament family. As to quaternary structure, heterotetramer of two type I and two type II keratins. keratin-4 is generally associated with keratin-13.

The protein is Keratin, type II cytoskeletal 4 of Rattus norvegicus (Rat).